Consider the following 264-residue polypeptide: Thymidylate synthase (264 aa).

A dUMP-binding site is contributed by R21. H51 contributes to the (6R)-5,10-methylene-5,6,7,8-tetrahydrofolate binding site. DUMP is bound at residue 126–127 (RR). C146 functions as the Nucleophile in the catalytic mechanism. Residues 166–169 (RSCD), N177, and 207–209 (HLY) contribute to the dUMP site. D169 is a (6R)-5,10-methylene-5,6,7,8-tetrahydrofolate binding site. S263 lines the (6R)-5,10-methylene-5,6,7,8-tetrahydrofolate pocket.

This sequence belongs to the thymidylate synthase family. Bacterial-type ThyA subfamily. Homodimer.

The protein localises to the cytoplasm. The enzyme catalyses dUMP + (6R)-5,10-methylene-5,6,7,8-tetrahydrofolate = 7,8-dihydrofolate + dTMP. It functions in the pathway pyrimidine metabolism; dTTP biosynthesis. Functionally, catalyzes the reductive methylation of 2'-deoxyuridine-5'-monophosphate (dUMP) to 2'-deoxythymidine-5'-monophosphate (dTMP) while utilizing 5,10-methylenetetrahydrofolate (mTHF) as the methyl donor and reductant in the reaction, yielding dihydrofolate (DHF) as a by-product. This enzymatic reaction provides an intracellular de novo source of dTMP, an essential precursor for DNA biosynthesis. The sequence is that of Thymidylate synthase from Wigglesworthia glossinidia brevipalpis.